The chain runs to 319 residues: Lipoyl synthase (319 aa).

A disordered region spans residues 1–24 (MAVVIDTVGARPRHPEKQANPDTP). Residues 13 to 24 (RHPEKQANPDTP) show a composition bias toward basic and acidic residues. [4Fe-4S] cluster-binding residues include C58, C63, C69, C84, C88, C91, and S298. A Radical SAM core domain is found at 70–287 (WDKSHATFMI…EEIARAKGFL (218 aa)).

Belongs to the radical SAM superfamily. Lipoyl synthase family. [4Fe-4S] cluster serves as cofactor.

Its subcellular location is the cytoplasm. It catalyses the reaction [[Fe-S] cluster scaffold protein carrying a second [4Fe-4S](2+) cluster] + N(6)-octanoyl-L-lysyl-[protein] + 2 oxidized [2Fe-2S]-[ferredoxin] + 2 S-adenosyl-L-methionine + 4 H(+) = [[Fe-S] cluster scaffold protein] + N(6)-[(R)-dihydrolipoyl]-L-lysyl-[protein] + 4 Fe(3+) + 2 hydrogen sulfide + 2 5'-deoxyadenosine + 2 L-methionine + 2 reduced [2Fe-2S]-[ferredoxin]. It functions in the pathway protein modification; protein lipoylation via endogenous pathway; protein N(6)-(lipoyl)lysine from octanoyl-[acyl-carrier-protein]: step 2/2. Catalyzes the radical-mediated insertion of two sulfur atoms into the C-6 and C-8 positions of the octanoyl moiety bound to the lipoyl domains of lipoate-dependent enzymes, thereby converting the octanoylated domains into lipoylated derivatives. In Phenylobacterium zucineum (strain HLK1), this protein is Lipoyl synthase.